A 72-amino-acid polypeptide reads, in one-letter code: uncharacterized protein (72 aa).

The protein belongs to the asfivirus I73R family.

It is found in the virion. This is an uncharacterized protein from Ornithodoros (relapsing fever ticks).